A 179-amino-acid chain; its full sequence is Probable protein archease (179 aa).

Ca(2+)-binding residues include D55, D178, and V179.

It belongs to the archease family.

Its function is as follows. Activates the tRNA-splicing ligase complex by facilitating the enzymatic turnover of catalytic subunit RtcB. Acts by promoting the guanylylation of RtcB, a key intermediate step in tRNA ligation. Can also alter the NTP specificity of RtcB such that ATP, dGTP or ITP is used efficiently. The chain is Probable protein archease from Mycobacterium tuberculosis (strain CDC 1551 / Oshkosh).